Reading from the N-terminus, the 143-residue chain is MAAEGRVQRVASELQKVISLLLRTKIKDSKLATATITEVELSKDLSYAKVYYTCLDIQEAQYISKAFEKSKGFFRSSIAKSLNLRIVPNLKFVYDKSLDYGMEMEGKIQQALEADSKIIKQDDNSLQENYKDSDKETKVEKLR.

Positions 123 to 143 (DNSLQENYKDSDKETKVEKLR) are disordered.

Belongs to the RbfA family. In terms of assembly, monomer. Binds 30S ribosomal subunits, but not 50S ribosomal subunits or 70S ribosomes.

It is found in the cytoplasm. Its function is as follows. One of several proteins that assist in the late maturation steps of the functional core of the 30S ribosomal subunit. Associates with free 30S ribosomal subunits (but not with 30S subunits that are part of 70S ribosomes or polysomes). Required for efficient processing of 16S rRNA. May interact with the 5'-terminal helix region of 16S rRNA. This chain is Ribosome-binding factor A, found in Francisella philomiragia subsp. philomiragia (strain ATCC 25017 / CCUG 19701 / FSC 153 / O#319-036).